The primary structure comprises 70 residues: Putative defensin-like protein 73 (70 aa).

A signal peptide spans 1-29; that stretch reads MNCKIEFMSFLVMTSIVILFLFVSGKVEA. Cystine bridges form between Cys-33–Cys-68, Cys-37–Cys-57, Cys-43–Cys-66, and Cys-47–Cys-67.

The protein belongs to the DEFL family.

It localises to the secreted. The polypeptide is Putative defensin-like protein 73 (LCR44) (Arabidopsis thaliana (Mouse-ear cress)).